We begin with the raw amino-acid sequence, 383 residues long: Adaptive-response sensory kinase SasA (383 aa).

Residues 152-365 (MVAHELRTPL…CFTFTVPIWQ (214 aa)) enclose the Histidine kinase domain. The residue at position 155 (His-155) is a Phosphohistidine; by autocatalysis.

Homooligomerizes. Interacts with KaiC. Participates in the KaiABC clock complex, whose core is composed of a KaiC homohexamer, 6 KaiB and up to 6 KaiA dimers. SasA and KaiB(fs) compete to bind to KaiC.

It carries out the reaction ATP + protein L-histidine = ADP + protein N-phospho-L-histidine.. In terms of biological role, member of the two-component regulatory system SasA/RpaA involved in genome-wide circadian gene expression. One of several clock output pathways. Participates in the Kai clock protein complex, the main circadian regulator in cyanobacteria, via its interaction with KaiC. KaiC enhances the autophosphorylation activity of SasA, which then transfers its phosphate group to RpaA to activate it. In addition to its output function, recruits fold-shifted KaiB (KaiB(fs)) to KaiC to cooperatively form the KaiB(6):KaiC(6) complex (independent of SasA kinase activity). Required for robustness of the circadian rhythm of gene expression and is involved in clock output, also required for adaptation to light/dark cycles. This Synechococcus sp. (strain CC9902) protein is Adaptive-response sensory kinase SasA.